Here is a 420-residue protein sequence, read N- to C-terminus: Sodium-dependent phosphate transport protein 4 (420 aa).

A disordered region spans residues 1–21 (MATKTELSPTARESKNAQDMQ). Asn49, Asn60, Asn68, and Asn77 each carry an N-linked (GlcNAc...) asparagine glycan. Transmembrane regions (helical) follow at residues 126 to 146 (SIAL…GGFI), 154 to 174 (FVFY…FVVI), 218 to 238 (IWSI…MVVY), 256 to 276 (LLSA…GYLA), 292 to 314 (IATI…LNSG), 319 to 341 (TALL…INVL), 357 to 377 (GFSS…LSQD), and 385 to 405 (VFFL…IFGE).

It belongs to the major facilitator superfamily. Sodium/anion cotransporter family. As to expression, expressed in the liver and kidney. It is detected in proximal tubules in renal cortex as well as some tubules and glomeruli, with highest expression at the apical side of proximal tubules (at protein level).

It localises to the endoplasmic reticulum membrane. It is found in the cell membrane. The catalysed reaction is urate(in) + Na(+)(out) = urate(out) + Na(+)(in). In terms of biological role, transports organic anions in a voltage-driven, multispecific, manner, on the apical side of renal proximal tubule. In particular, participates in the secretion of urate from the cell into the lumen. Urate is the end product of purine metabolism. May have roles in the metabolism and secretion of estrone sulfate, estradiol-17-beta-glucuronide, ochratoxin A, as wells as drugs such as bumetanide. The polypeptide is Sodium-dependent phosphate transport protein 4 (SLC17A3) (Homo sapiens (Human)).